Consider the following 643-residue polypeptide: Threonine--tRNA ligase (643 aa).

Positions methionine 1–tyrosine 61 constitute a TGS domain. Positions aspartate 244–proline 535 are catalytic. Zn(2+)-binding residues include cysteine 335, histidine 386, and histidine 512.

Belongs to the class-II aminoacyl-tRNA synthetase family. In terms of assembly, homodimer. It depends on Zn(2+) as a cofactor.

It localises to the cytoplasm. The catalysed reaction is tRNA(Thr) + L-threonine + ATP = L-threonyl-tRNA(Thr) + AMP + diphosphate + H(+). Functionally, catalyzes the attachment of threonine to tRNA(Thr) in a two-step reaction: L-threonine is first activated by ATP to form Thr-AMP and then transferred to the acceptor end of tRNA(Thr). Also edits incorrectly charged L-seryl-tRNA(Thr). This Buchnera aphidicola subsp. Baizongia pistaciae (strain Bp) protein is Threonine--tRNA ligase.